A 94-amino-acid chain; its full sequence is Small ribosomal subunit protein uS19 (94 aa).

The protein belongs to the universal ribosomal protein uS19 family.

Protein S19 forms a complex with S13 that binds strongly to the 16S ribosomal RNA. The chain is Small ribosomal subunit protein uS19 (rpsS) from Lactobacillus acidophilus (strain ATCC 700396 / NCK56 / N2 / NCFM).